Here is a 455-residue protein sequence, read N- to C-terminus: Bifunctional protein GlmU (455 aa).

The segment at 1–230 (MSNRFAVILA…VEETLGVNDR (230 aa)) is pyrophosphorylase. UDP-N-acetyl-alpha-D-glucosamine-binding positions include 9–12 (LAAG), lysine 23, glutamine 73, and 78–79 (GT). Aspartate 103 provides a ligand contact to Mg(2+). Positions 140, 155, 170, and 228 each coordinate UDP-N-acetyl-alpha-D-glucosamine. Position 228 (asparagine 228) interacts with Mg(2+). Residues 231 to 251 (VALAQAEQVMKRRINEAWMRK) are linker. An N-acetyltransferase region spans residues 252–455 (GVTFIDPEQT…KEHYVTKKNN (204 aa)). UDP-N-acetyl-alpha-D-glucosamine-binding residues include arginine 333 and lysine 351. Residue histidine 363 is the Proton acceptor of the active site. Residues tyrosine 366 and asparagine 377 each coordinate UDP-N-acetyl-alpha-D-glucosamine. Acetyl-CoA is bound by residues 386-387 (NY), alanine 423, and arginine 440.

In the N-terminal section; belongs to the N-acetylglucosamine-1-phosphate uridyltransferase family. This sequence in the C-terminal section; belongs to the transferase hexapeptide repeat family. In terms of assembly, homotrimer. It depends on Mg(2+) as a cofactor.

It localises to the cytoplasm. It carries out the reaction alpha-D-glucosamine 1-phosphate + acetyl-CoA = N-acetyl-alpha-D-glucosamine 1-phosphate + CoA + H(+). The enzyme catalyses N-acetyl-alpha-D-glucosamine 1-phosphate + UTP + H(+) = UDP-N-acetyl-alpha-D-glucosamine + diphosphate. It functions in the pathway nucleotide-sugar biosynthesis; UDP-N-acetyl-alpha-D-glucosamine biosynthesis; N-acetyl-alpha-D-glucosamine 1-phosphate from alpha-D-glucosamine 6-phosphate (route II): step 2/2. It participates in nucleotide-sugar biosynthesis; UDP-N-acetyl-alpha-D-glucosamine biosynthesis; UDP-N-acetyl-alpha-D-glucosamine from N-acetyl-alpha-D-glucosamine 1-phosphate: step 1/1. The protein operates within bacterial outer membrane biogenesis; LPS lipid A biosynthesis. Functionally, catalyzes the last two sequential reactions in the de novo biosynthetic pathway for UDP-N-acetylglucosamine (UDP-GlcNAc). The C-terminal domain catalyzes the transfer of acetyl group from acetyl coenzyme A to glucosamine-1-phosphate (GlcN-1-P) to produce N-acetylglucosamine-1-phosphate (GlcNAc-1-P), which is converted into UDP-GlcNAc by the transfer of uridine 5-monophosphate (from uridine 5-triphosphate), a reaction catalyzed by the N-terminal domain. This chain is Bifunctional protein GlmU, found in Halalkalibacterium halodurans (strain ATCC BAA-125 / DSM 18197 / FERM 7344 / JCM 9153 / C-125) (Bacillus halodurans).